A 97-amino-acid chain; its full sequence is Large ribosomal subunit protein eL21 (97 aa).

Residues 1 to 26 (MQKSEGFRSKTRYKLQKHPRQKGMAP) form a disordered region. Residues 9–21 (SKTRYKLQKHPRQ) are compositionally biased toward basic residues.

It belongs to the eukaryotic ribosomal protein eL21 family.

In Methanococcus maripaludis (strain C5 / ATCC BAA-1333), this protein is Large ribosomal subunit protein eL21.